The chain runs to 103 residues: ESAT-6-like protein EsxF (103 aa).

This sequence belongs to the WXG100 family. CFP-10 subfamily.

The protein resides in the secreted. This chain is ESAT-6-like protein EsxF, found in Mycobacterium tuberculosis (strain CDC 1551 / Oshkosh).